Here is a 408-residue protein sequence, read N- to C-terminus: ATP phosphoribosyltransferase regulatory subunit (408 aa).

This sequence belongs to the class-II aminoacyl-tRNA synthetase family. HisZ subfamily. As to quaternary structure, heteromultimer composed of HisG and HisZ subunits.

Its subcellular location is the cytoplasm. It functions in the pathway amino-acid biosynthesis; L-histidine biosynthesis; L-histidine from 5-phospho-alpha-D-ribose 1-diphosphate: step 1/9. Its function is as follows. Required for the first step of histidine biosynthesis. May allow the feedback regulation of ATP phosphoribosyltransferase activity by histidine. In Gloeothece citriformis (strain PCC 7424) (Cyanothece sp. (strain PCC 7424)), this protein is ATP phosphoribosyltransferase regulatory subunit.